Reading from the N-terminus, the 613-residue chain is Ribosome-associated molecular chaperone SSB1 (613 aa).

Positions 1–391 (MADGVFQGAI…ILTGQSTNDD (391 aa)) are nucleotide binding domain (NBD). ATP contacts are provided by residues 16–18 (TTY), Lys73, 205–207 (GGT), 271–278 (ERAKRSLS), and Gly342. The tract at residues 392-402 (TKDLLLLDVIP) is inter-domain linker. The segment at 403-613 (LSLGVAMQGN…RAVTKGMATR (211 aa)) is substrate binding domain (SBD). The lid domain (SBDalpha) stretch occupies residues 516–612 (TEEIEKMISD…KRAVTKGMAT (97 aa)). Positions 574-582 (IEAALSDAL) match the Nuclear export signal motif.

The protein belongs to the heat shock protein 70 family. Ssb-type Hsp70 subfamily. In terms of assembly, binds to ribosomes. Binds close to the ribosomal tunnel exit via contacts with both ribosomal proteins and rRNA. Directly interacts with nascent polypeptides. This interaction is dependent on the ribosome-associated complex (RAC). Interacts with SSE1. Interacts with FES1.

It is found in the cytoplasm. It catalyses the reaction ATP + H2O = ADP + phosphate + H(+). Ribosome-bound, Hsp70-type chaperone that assists in the cotranslational folding of newly synthesized proteins in the cytosol. Stimulates folding by interacting with nascent chains, binding to short, largely hydrophobic sequences exposed by unfolded proteins, thereby stabilizing longer, more slowly translated, and aggregation-prone nascent polypeptides and domains that cannot fold stably until fully synthesized. The Hsp70-protein substrate interaction depends on ATP-binding and on allosteric regulation between the NBD and the SBD. The ATP-bound state is characterized by a fast exchange rate of substrate (low affinity state), while in the ADP-bound state exchange is much slower (high affinity state). During the Hsp70 cycle, the chaperone switches between the ATP-bound state (open conformation) and the ADP-bound state (closed conformation) by major conformational rearrangements involving mainly the lid domain. Ssb cooperates with a specific Hsp40/Hsp70 co-chaperone termed the ribosome-associated complex (RAC), which stimulates the ATPase activity of the ribosome-associated pool of Ssbs and switches it to the high affinity substrate binding state. Hsp110 chaperone SSE1 and FES1 act as nucleotide exchange factors that cause substrate release. In Candida albicans (strain WO-1) (Yeast), this protein is Ribosome-associated molecular chaperone SSB1 (SSB1).